The following is a 164-amino-acid chain: Cyanate hydratase (164 aa).

Active-site residues include Arg-90, Glu-93, and Ser-116.

The protein belongs to the cyanase family.

The enzyme catalyses cyanate + hydrogencarbonate + 3 H(+) = NH4(+) + 2 CO2. Functionally, catalyzes the reaction of cyanate with bicarbonate to produce ammonia and carbon dioxide. This is Cyanate hydratase from Ricinus communis (Castor bean).